A 311-amino-acid chain; its full sequence is Salutaridine reductase (311 aa).

NADP(+) is bound at residue 17-40 (VTGGNKGIGFEICKQLSSSGIMVV). Ser-180 serves as a coordination point for substrate. The active-site Proton acceptor is the Tyr-236.

This sequence belongs to the short-chain dehydrogenases/reductases (SDR) family.

It catalyses the reaction (7S)-salutaridinol + NADP(+) = salutaridine + NADPH + H(+). With respect to regulation, subject to substrate inhibition at salutaridine concentrations higher than 20 to 30 uM. Involved in biosynthesis of morphinan-type benzylisoquinoline alkaloids. Catalyzes the stereospecific conversion of salutaridine to salutaridinol. This is Salutaridine reductase from Papaver bracteatum (Great scarlet poppy).